Here is a 286-residue protein sequence, read N- to C-terminus: MTDRQPLISKNDDIINNLTRFYTELTEFEKIIKDVGTGRDTTTLRSTLHKKKVNLADDLKVIAQQIKQLPSSKLPKFQQEKIVKQFKEASSKFEELLSTSNKKESSHEPIVPSQQQQQQQNNGNSNNNGYNTRGGYNQQQQQQQQQYNDYTNNNNNNNNNEVEQYNRLEQALKSGIEQDEEEYTNRILDERNANARQIARDVAMLKEAMDDIAVMVGEQGEMLEKVDDNVTNADVAVEDAVVELEKAYVYKSSYRKKMIIFVICLLVTLVAVGIFLAIYYGVIKKK.

The Cytoplasmic portion of the chain corresponds to 1–257 (MTDRQPLISK…YVYKSSYRKK (257 aa)). Residues 97 to 107 (LSTSNKKESSH) are compositionally biased toward basic and acidic residues. Residues 97 to 160 (LSTSNKKESS…TNNNNNNNNN (64 aa)) form a disordered region. Low complexity predominate over residues 114-160 (QQQQQQQNNGNSNNNGYNTRGGYNQQQQQQQQQYNDYTNNNNNNNNN). The 63-residue stretch at 185–247 (NRILDERNAN…EDAVVELEKA (63 aa)) folds into the t-SNARE coiled-coil homology domain. Residues 258 to 278 (MIIFVICLLVTLVAVGIFLAI) form a helical; Anchor for type IV membrane protein membrane-spanning segment. At 279–286 (YYGVIKKK) the chain is on the vesicular side.

This sequence belongs to the syntaxin family.

The protein localises to the membrane. In Dictyostelium discoideum (Social amoeba), this protein is Probable syntaxin-7B (syn7B).